Reading from the N-terminus, the 373-residue chain is Queuine tRNA-ribosyltransferase (373 aa).

The active-site Proton acceptor is the Asp-91. Substrate-binding positions include 91 to 95 (DSGGF), Asp-145, Gln-187, and Gly-214. The RNA binding stretch occupies residues 245–251 (GVGKPED). Residue Asp-264 is the Nucleophile of the active site. An RNA binding; important for wobble base 34 recognition region spans residues 269 to 273 (TRNAR). Residues Cys-302, Cys-304, Cys-307, and His-333 each contribute to the Zn(2+) site.

This sequence belongs to the queuine tRNA-ribosyltransferase family. In terms of assembly, homodimer. Within each dimer, one monomer is responsible for RNA recognition and catalysis, while the other monomer binds to the replacement base PreQ1. Zn(2+) is required as a cofactor.

It carries out the reaction 7-aminomethyl-7-carbaguanine + guanosine(34) in tRNA = 7-aminomethyl-7-carbaguanosine(34) in tRNA + guanine. It functions in the pathway tRNA modification; tRNA-queuosine biosynthesis. Catalyzes the base-exchange of a guanine (G) residue with the queuine precursor 7-aminomethyl-7-deazaguanine (PreQ1) at position 34 (anticodon wobble position) in tRNAs with GU(N) anticodons (tRNA-Asp, -Asn, -His and -Tyr). Catalysis occurs through a double-displacement mechanism. The nucleophile active site attacks the C1' of nucleotide 34 to detach the guanine base from the RNA, forming a covalent enzyme-RNA intermediate. The proton acceptor active site deprotonates the incoming PreQ1, allowing a nucleophilic attack on the C1' of the ribose to form the product. After dissociation, two additional enzymatic reactions on the tRNA convert PreQ1 to queuine (Q), resulting in the hypermodified nucleoside queuosine (7-(((4,5-cis-dihydroxy-2-cyclopenten-1-yl)amino)methyl)-7-deazaguanosine). In Idiomarina loihiensis (strain ATCC BAA-735 / DSM 15497 / L2-TR), this protein is Queuine tRNA-ribosyltransferase.